Consider the following 156-residue polypeptide: Small ribosomal subunit protein uS7 (156 aa).

Belongs to the universal ribosomal protein uS7 family. As to quaternary structure, part of the 30S ribosomal subunit. Contacts proteins S9 and S11.

Its function is as follows. One of the primary rRNA binding proteins, it binds directly to 16S rRNA where it nucleates assembly of the head domain of the 30S subunit. Is located at the subunit interface close to the decoding center, probably blocks exit of the E-site tRNA. This is Small ribosomal subunit protein uS7 from Acinetobacter baylyi (strain ATCC 33305 / BD413 / ADP1).